A 248-amino-acid chain; its full sequence is tRNA (guanine-N(1)-)-methyltransferase (248 aa).

S-adenosyl-L-methionine contacts are provided by residues G113 and 133-138; that span reads IGDYVL.

This sequence belongs to the RNA methyltransferase TrmD family. Homodimer.

Its subcellular location is the cytoplasm. It catalyses the reaction guanosine(37) in tRNA + S-adenosyl-L-methionine = N(1)-methylguanosine(37) in tRNA + S-adenosyl-L-homocysteine + H(+). Specifically methylates guanosine-37 in various tRNAs. In Shewanella woodyi (strain ATCC 51908 / MS32), this protein is tRNA (guanine-N(1)-)-methyltransferase.